Consider the following 1003-residue polypeptide: Putative helicase MOV-10 (1003 aa).

Position 148 is an N6-acetyllysine (Lys-148). A phosphothreonine mark is found at Thr-160 and Thr-254. A Phosphoserine modification is found at Ser-432. An ATP-binding site is contributed by 524–531 (GPPGTGKT). Positions 645-648 (DEAG) match the DEAG box motif. An interaction with AGO2 and APOBEC3G region spans residues 921–965 (NPLLLGHDPDWKVFLEFCKENGGYTGCPFPAKLDLQQGQNLLQGL). The disordered stretch occupies residues 968–1003 (LSPSTSGLKSHDYLPQEREGEEGLSLQVEPEWRNEL). Residues Ser-969 and Ser-977 each carry the phosphoserine modification. The segment covering 976–985 (KSHDYLPQER) has biased composition (basic and acidic residues).

This sequence belongs to the DNA2/NAM7 helicase family. SDE3 subfamily. As to quaternary structure, interacts with DICER1, AGO2, TARBP2, EIF6 and RPL7A (60S ribosome subunit); they form a large RNA-induced silencing complex (RISC). Interacts with APOBEC3G in an RNA-dependent manner. Interacts with TRIM71 (via NHL repeats) in an RNA-dependent manner. Interacts with both protein products of LIRE1, ORF1p and ORF2p. Interacts with TUT4 and, to a lesser extent, TUT7; the interactions are RNA-dependent. Interacts with AGO2, TNRC6B and UPF1; the interactions are direct and RNA-dependent. Interacts with FMR1; this interaction is direct, occurs in an RNA-dependent manner on polysomes and induces association of MOV10 with RNAs. Interacts with SHFL; the interaction increases in presence of RNA. Interacts with DHX34; the interaction is-RNA independent. Interacts with RBM46. Ubiquitinated by the DCX(DCAF12) complex that specifically recognizes the glutamate-leucine (Glu-Leu) degron at the C-terminus, leading to its degradation.

The protein localises to the cytoplasm. It localises to the P-body. It is found in the cytoplasmic ribonucleoprotein granule. Its subcellular location is the stress granule. The protein resides in the nucleus. The catalysed reaction is ATP + H2O = ADP + phosphate + H(+). In terms of biological role, 5' to 3' RNA helicase that is involved in a number of cellular roles ranging from mRNA metabolism and translation, modulation of viral infectivity, inhibition of retrotransposition, or regulation of synaptic transmission. Plays an important role in innate antiviral immunity by promoting type I interferon production. Mechanistically, specifically uses IKKepsilon/IKBKE as the mediator kinase for IRF3 activation. Contributes to UPF1 mRNA target degradation by translocation along 3' UTRs. Required for microRNA (miRNA)-mediated gene silencing by the RNA-induced silencing complex (RISC). Required for both miRNA-mediated translational repression and miRNA-mediated cleavage of complementary mRNAs by RISC. In cooperation with FMR1, regulates miRNA-mediated translational repression by AGO2. Restricts retrotransposition of long interspersed element-1 (LINE-1) in cooperation with TUT4 and TUT7 counteracting the RNA chaperonne activity of L1RE1. Facilitates LINE-1 uridylation by TUT4 and TUT7. Required for embryonic viability and for normal central nervous system development and function. Plays two critical roles in early brain development: suppresses retroelements in the nucleus by directly inhibiting cDNA synthesis, while regulates cytoskeletal mRNAs to influence neurite outgrowth in the cytosol. May function as a messenger ribonucleoprotein (mRNP) clearance factor. This chain is Putative helicase MOV-10 (MOV10), found in Bos taurus (Bovine).